Reading from the N-terminus, the 465-residue chain is Alpha-2A adrenergic receptor (465 aa).

Topologically, residues 1–48 (MFRQEQPLAEGSFAPMGSLQPDAGNASWNGTEAPGGGARATPYSLQVT) are extracellular. 2 N-linked (GlcNAc...) asparagine glycosylation sites follow: N25 and N29. A helical transmembrane segment spans residues 49-74 (LTLVCLAGLLMLLTVFGNVLVIIAVF). Over 75–85 (TSRALKAPQNL) the chain is Cytoplasmic. Residues 86–111 (FLVSLASADILVATLVIPFSLANEVM) form a helical membrane-spanning segment. Topologically, residues 112 to 121 (GYWYFGKAWC) are extracellular. Residues C121 and C203 are joined by a disulfide bond. A helical membrane pass occupies residues 122-144 (EIYLALDVLFCTSSIVHLCAISL). Over 145–166 (DRYWSITQAIEYNLKRTPRRIK) the chain is Cytoplasmic. The chain crosses the membrane as a helical span at residues 167 to 187 (AIIITVWVISAVISFPPLISI). The Extracellular portion of the chain corresponds to 188 to 209 (EKKGGGGGPQPAEPRCEINDQK). The chain crosses the membrane as a helical span at residues 210 to 232 (WYVISSCIGSFFAPCLIMILVYV). Topologically, residues 233 to 389 (RIYQIAKRRT…RQNREKRFTF (157 aa)) are cytoplasmic. Positions 242-368 (TRVPPSRRGP…TPAAGPGEER (127 aa)) are disordered. A compositionally biased stretch (basic and acidic residues) spans 313 to 330 (SSDHAERPPGPRRPERGP). Position 346 is a phosphoserine (S346). An Omega-N-methylarginine modification is found at R368. The chain crosses the membrane as a helical span at residues 390-410 (VLAVVIGVFVVCWFPFFFTYT). The Extracellular portion of the chain corresponds to 411–424 (LTAVGCSVPRTLFK). A helical membrane pass occupies residues 425 to 444 (FFFWFGYCNSSLNPVIYTIF). At 445-465 (NHDFRRAFKKILCRGDRKRIV) the chain is on the cytoplasmic side. A lipid anchor (S-palmitoyl cysteine) is attached at C457.

This sequence belongs to the G-protein coupled receptor 1 family. Adrenergic receptor subfamily. ADRA2A sub-subfamily.

It is found in the cell membrane. Alpha-2 adrenergic receptors mediate the catecholamine-induced inhibition of adenylate cyclase through the action of G proteins. The rank order of potency for agonists of this receptor is oxymetazoline &gt; clonidine &gt; epinephrine &gt; norepinephrine &gt; phenylephrine &gt; dopamine &gt; p-synephrine &gt; p-tyramine &gt; serotonin = p-octopamine. For antagonists, the rank order is yohimbine &gt; phentolamine = mianserine &gt; chlorpromazine = spiperone = prazosin &gt; propanolol &gt; alprenolol = pindolol. This chain is Alpha-2A adrenergic receptor, found in Homo sapiens (Human).